The primary structure comprises 211 residues: Mitotic spindle assembly checkpoint protein MAD2B (211 aa).

Positions 13–203 constitute an HORMA domain; it reads QVVADILCEF…SDILKMQLYV (191 aa).

In terms of assembly, homooligomer. Interacts with rev1. Interacts with rev3l. Interacts with fzr1 (in complex with the anaphase promoting complex APC). May interact with cdc20.

Its subcellular location is the nucleus. It localises to the cytoplasm. The protein localises to the cytoskeleton. The protein resides in the spindle. Adapter protein able to interact with different proteins and involved in different biological processes. Mediates the interaction between the error-prone DNA polymerase zeta catalytic subunit rev3l and the inserter polymerase rev1, thereby mediating the second polymerase switching in translesion DNA synthesis. Translesion DNA synthesis releases the replication blockade of replicative polymerases, stalled in presence of DNA lesions. May also play a role in signal transduction in response to DNA damage. May regulate the activation of the anaphase promoting complex APC thereby regulating progression through the cell cycle. Through transcriptional regulation may play a role in epithelial-mesenchymal transdifferentiation. This Danio rerio (Zebrafish) protein is Mitotic spindle assembly checkpoint protein MAD2B (mad2l2).